A 64-amino-acid chain; its full sequence is Toxin Tce3 (64 aa).

The LCN-type CS-alpha/beta domain occupies 1–62 (KDGYIIEHRG…IFDSNNNKCS (62 aa)). Disulfide bonds link Cys11–Cys61, Cys15–Cys37, Cys23–Cys42, and Cys27–Cys44.

This sequence belongs to the long (4 C-C) scorpion toxin superfamily. Sodium channel inhibitor family. Beta subfamily. In terms of tissue distribution, expressed by the venom gland.

The protein resides in the secreted. In terms of biological role, inhibits the sodium (Nav) currents in an apparent irreversible manner. Produces small depolarization and induces repetitive firing in squid axons. Is specific for arthropods (crickets, triatomides, crabs and squids), but is non-toxic to mice. Shows antibacterial activity against both Gram-positive and Gram-negative bacteria. The polypeptide is Toxin Tce3 (Tityus cerroazul (Scorpion)).